Consider the following 954-residue polypeptide: Valine--tRNA ligase (954 aa).

The 'HIGH' region signature appears at 48–58 (PNVTGSLHMGH). Residues 560–564 (KMSKS) carry the 'KMSKS' region motif. Lys-563 is a binding site for ATP. A coiled-coil region spans residues 883 to 953 (AGFINKEAEL…IQEQYKAIEA (71 aa)).

This sequence belongs to the class-I aminoacyl-tRNA synthetase family. ValS type 1 subfamily. Monomer.

The protein localises to the cytoplasm. It carries out the reaction tRNA(Val) + L-valine + ATP = L-valyl-tRNA(Val) + AMP + diphosphate. Catalyzes the attachment of valine to tRNA(Val). As ValRS can inadvertently accommodate and process structurally similar amino acids such as threonine, to avoid such errors, it has a 'posttransfer' editing activity that hydrolyzes mischarged Thr-tRNA(Val) in a tRNA-dependent manner. The chain is Valine--tRNA ligase from Haemophilus influenzae (strain 86-028NP).